The sequence spans 535 residues: Major glycerophosphoinositol permease GIT3 (535 aa).

Residues 49-69 traverse the membrane as a helical segment; that stretch reads VVTSVKANSLWPAFASGAGLF. The N-linked (GlcNAc...) asparagine glycan is linked to Asn75. Helical transmembrane passes span 101-121, 137-157, 165-185, 204-224, and 232-252; these read NIAS…GYIS, LIFF…QGFF, FFLG…ASEF, AMID…IWIF, and LWRV…FMRL. The N-linked (GlcNAc...) asparagine glycan is linked to Asn256. The next 6 helical transmembrane spans lie at 275-295, 324-344, 352-372, 378-398, 419-439, and 455-475; these read WWLI…IWFI, WGWS…GAIS, LTLA…SACL, HIAG…FGPG, GIAA…FPAI, and VPFY…IFFC. A glycan (N-linked (GlcNAc...) asparagine) is linked at Asn532.

The protein belongs to the major facilitator superfamily. Sugar transporter (TC 2.A.1.1) family.

The protein localises to the cell membrane. The catalysed reaction is sn-glycerol 3-phosphocholine(out) = sn-glycerol 3-phosphocholine(in). Its function is as follows. Glycerophosphodiester transporter that mediates uptake of glycerophosphocholine (GroPCho) with GIT4. GIT3 acts as the major GroPCho permease. Does not possess detectable glycerophosphoinositol (GroPIns) transport activity. The expanded ability to utilize GroPIns and GroPCho results from the organism's pathogenic nature and its need to occupy a variety of environments within its host organism. This possibility is buttressed by the fact that GroPIns and GroPCho are present and abundant in human fluids. This chain is Major glycerophosphoinositol permease GIT3, found in Candida albicans (strain SC5314 / ATCC MYA-2876) (Yeast).